The following is a 38-amino-acid chain: Large ribosomal subunit protein bL36 (38 aa).

It belongs to the bacterial ribosomal protein bL36 family.

This is Large ribosomal subunit protein bL36 from Methylacidiphilum infernorum (isolate V4) (Methylokorus infernorum (strain V4)).